A 486-amino-acid chain; its full sequence is Nucleolar GTP-binding protein 2 (486 aa).

A disordered region spans residues 1 to 20 (MGTGKKEKSRRIREGDTKDG). Residues serine 60, serine 85, and serine 155 each carry the phosphoserine modification. The region spanning 212-373 (WNELYKVIDS…LIDCPGIVPP (162 aa)) is the CP-type G domain. GTP contacts are provided by residues 322–329 (GYPNTGKS) and 366–370 (DCPGI).

This sequence belongs to the TRAFAC class YlqF/YawG GTPase family. NOG2 subfamily.

The protein resides in the nucleus. Its subcellular location is the nucleolus. Functionally, GTPase that associates with pre-60S ribosomal subunits in the nucleolus and is required for their nuclear export and maturation. The chain is Nucleolar GTP-binding protein 2 (NOG2) from Saccharomyces cerevisiae (strain ATCC 204508 / S288c) (Baker's yeast).